A 756-amino-acid chain; its full sequence is NADP-dependent malic enzyme (756 aa).

A malic enzyme region spans residues 1–428 (MTEQLRQAAL…KLTQFVYKTS (428 aa)). The active-site Proton donor is tyrosine 39. Catalysis depends on lysine 94, which acts as the Proton acceptor. A divalent metal cation-binding residues include glutamate 136, aspartate 137, and aspartate 162. NADP(+) is bound by residues 195 to 198 (AGAA), asparagine 288, and asparagine 320. Residues 429-756 (LFMRPIFSQA…AYAAVKAQQE (328 aa)) form a phosphate acetyltransferase region.

It in the N-terminal section; belongs to the malic enzymes family. The protein in the C-terminal section; belongs to the phosphate acetyltransferase and butyryltransferase family. The cofactor is Mg(2+). Mn(2+) serves as cofactor.

It carries out the reaction (S)-malate + NADP(+) = pyruvate + CO2 + NADPH. The catalysed reaction is oxaloacetate + H(+) = pyruvate + CO2. The polypeptide is NADP-dependent malic enzyme (maeB) (Haemophilus influenzae (strain ATCC 51907 / DSM 11121 / KW20 / Rd)).